The chain runs to 207 residues: Macrophage immunometabolism regulator (207 aa).

Methionine 1 bears the N-acetylmethionine mark. Residues 1-41 form a disordered region; the sequence is MEVDVNGESRSALTTLPLPVAEASSPGKAEAEKPRCSSTPC. 3 positions are modified to phosphoserine: serine 25, serine 140, and serine 167.

The protein belongs to the UNC119-binding protein family. Interacts with UNC119 and UNC119B; interaction preferentially takes place when UNC119 and UNC119B are unliganded with myristoylated proteins.

It is found in the cytoplasm. The protein resides in the cell projection. Its subcellular location is the cilium. Its function is as follows. Regulates the macrophage function, by enhancing the resolution of inflammation and wound repair functions mediated by M2 macrophages. The regulation of macrophage function is, due at least in part, to its ability to inhibit glycolysis. May play also a role in trafficking of proteins via its interaction with UNC119 and UNC119B cargo adapters: may help the release of UNC119 and UNC119B cargo or the recycling of UNC119 and UNC119B. May play a role in ciliary membrane localization via its interaction with UNC119B and protein transport into photoreceptor cells. The protein is Macrophage immunometabolism regulator (MACIR) of Bos taurus (Bovine).